The primary structure comprises 89 residues: Small ribosomal subunit protein uS17 (89 aa).

It belongs to the universal ribosomal protein uS17 family. Part of the 30S ribosomal subunit.

In terms of biological role, one of the primary rRNA binding proteins, it binds specifically to the 5'-end of 16S ribosomal RNA. The chain is Small ribosomal subunit protein uS17 from Xanthomonas campestris pv. campestris (strain B100).